The primary structure comprises 170 residues: NADH-quinone oxidoreductase subunit B (170 aa).

Residues Cys42, Cys43, Cys107, and Cys136 each contribute to the [4Fe-4S] cluster site.

This sequence belongs to the complex I 20 kDa subunit family. As to quaternary structure, NDH-1 is composed of 14 different subunits. Subunits NuoB, C, D, E, F, and G constitute the peripheral sector of the complex. [4Fe-4S] cluster serves as cofactor.

It is found in the cell inner membrane. It carries out the reaction a quinone + NADH + 5 H(+)(in) = a quinol + NAD(+) + 4 H(+)(out). In terms of biological role, NDH-1 shuttles electrons from NADH, via FMN and iron-sulfur (Fe-S) centers, to quinones in the respiratory chain. The immediate electron acceptor for the enzyme in this species is believed to be ubiquinone. Couples the redox reaction to proton translocation (for every two electrons transferred, four hydrogen ions are translocated across the cytoplasmic membrane), and thus conserves the redox energy in a proton gradient. This chain is NADH-quinone oxidoreductase subunit B, found in Campylobacter concisus (strain 13826).